The sequence spans 130 residues: Serum amyloid A-4 protein (130 aa).

Residues 1–18 (MRLFTGIVFCSLVMGVTS) form the signal peptide. N-linked (GlcNAc...) asparagine; partial glycosylation is present at Asn-94. Positions 101–130 (DSKSNEKAEEWGRSGKDPDRFRPDGLPKKY) are disordered.

It belongs to the SAA family. As to quaternary structure, apolipoprotein of the HDL complex. Expressed by the liver; secreted in plasma.

The protein localises to the secreted. Its function is as follows. Major acute phase reactant. In Homo sapiens (Human), this protein is Serum amyloid A-4 protein.